The following is a 359-amino-acid chain: UPF0284 protein MAE_56900 (359 aa).

It belongs to the UPF0284 family.

The polypeptide is UPF0284 protein MAE_56900 (Microcystis aeruginosa (strain NIES-843 / IAM M-2473)).